We begin with the raw amino-acid sequence, 248 residues long: Ribonuclease PH (248 aa).

Residues Arg86 and 124 to 126 contribute to the phosphate site; that span reads GTR.

It belongs to the RNase PH family. Homohexameric ring arranged as a trimer of dimers.

The catalysed reaction is tRNA(n+1) + phosphate = tRNA(n) + a ribonucleoside 5'-diphosphate. Functionally, phosphorolytic 3'-5' exoribonuclease that plays an important role in tRNA 3'-end maturation. Removes nucleotide residues following the 3'-CCA terminus of tRNAs; can also add nucleotides to the ends of RNA molecules by using nucleoside diphosphates as substrates, but this may not be physiologically important. Probably plays a role in initiation of 16S rRNA degradation (leading to ribosome degradation) during starvation. In Clostridium perfringens (strain 13 / Type A), this protein is Ribonuclease PH.